Consider the following 299-residue polypeptide: ATP phosphoribosyltransferase (299 aa).

It belongs to the ATP phosphoribosyltransferase family. Long subfamily. In terms of assembly, equilibrium between an active dimeric form, an inactive hexameric form and higher aggregates. Interconversion between the various forms is largely reversible and is influenced by the natural substrates and inhibitors of the enzyme. Mg(2+) serves as cofactor.

It is found in the cytoplasm. It catalyses the reaction 1-(5-phospho-beta-D-ribosyl)-ATP + diphosphate = 5-phospho-alpha-D-ribose 1-diphosphate + ATP. It functions in the pathway amino-acid biosynthesis; L-histidine biosynthesis; L-histidine from 5-phospho-alpha-D-ribose 1-diphosphate: step 1/9. Its activity is regulated as follows. Feedback inhibited by histidine. Catalyzes the condensation of ATP and 5-phosphoribose 1-diphosphate to form N'-(5'-phosphoribosyl)-ATP (PR-ATP). Has a crucial role in the pathway because the rate of histidine biosynthesis seems to be controlled primarily by regulation of HisG enzymatic activity. The polypeptide is ATP phosphoribosyltransferase (Shigella flexneri serotype 5b (strain 8401)).